We begin with the raw amino-acid sequence, 427 residues long: Peptidase B (427 aa).

Mn(2+) is bound by residues K195 and D200. K207 is an active-site residue. Positions 218, 277, and 279 each coordinate Mn(2+). Residue R281 is part of the active site.

Belongs to the peptidase M17 family. In terms of assembly, homohexamer. The cofactor is Mn(2+).

The protein resides in the cytoplasm. The enzyme catalyses Release of an N-terminal amino acid, Xaa, from a peptide or arylamide. Xaa is preferably Glu or Asp but may be other amino acids, including Leu, Met, His, Cys and Gln.. Probably plays an important role in intracellular peptide degradation. In Escherichia coli O157:H7, this protein is Peptidase B.